The following is a 139-amino-acid chain: Toxin FitB (139 aa).

Residues 2 to 123 (ILLDTNVISE…HSLTVATRDT (122 aa)) form the PINc domain. Residues Asp5 and Asp104 each coordinate Mg(2+).

It belongs to the PINc/VapC protein family. In terms of assembly, forms a heterodimer with FitA, 4 FitAB heterodimers form a complex that binds to promoter DNA. The complex is also seen in solution. This protein does not actually contact DNA. Requires Mg(2+) as cofactor.

Its function is as follows. Toxic component of a type II toxin-antitoxin (TA) system. Plays a role in the speed with which bacteria traverse human epithelial cells; disruption of the locus increases the speed of trafficking about 2-4-fold. FitAB binds to its own promoter better than FitA alone. The expected nuclease activity was not observed for the FitAB complex, perhaps because FitA (the antitoxin) prevents metal binding and thus catalysis by FitB. This is Toxin FitB (fitB) from Neisseria gonorrhoeae (strain ATCC 700825 / FA 1090).